The primary structure comprises 501 residues: Cytokinin dehydrogenase 2 (501 aa).

Residues 1–22 (MANLRLMITLITVLMITKSSNG) form the signal peptide. N-linked (GlcNAc...) asparagine glycans are attached at residues N32 and N51. In terms of domain architecture, FAD-binding PCMH-type spans 53-226 (TTVTPGGVIC…TRARIVLDHA (174 aa)). FAD-binding residues include A87, G89, and G91. The residue at position 92 (H92) is a Pros-8alpha-FAD histidine. FAD contacts are provided by S93 and Q97. An N-linked (GlcNAc...) asparagine glycan is attached at N107. FAD contacts are provided by D150, T155, S161, I165, I216, Y460, S495, and Q498.

It belongs to the oxygen-dependent FAD-linked oxidoreductase family. FAD serves as cofactor. As to expression, expressed in the shoot apex, in stipules, and occasionally in the most apical part of the inflorescence stems. Not detected in roots.

Its subcellular location is the endoplasmic reticulum. It localises to the secreted. The protein localises to the extracellular space. The enzyme catalyses N(6)-dimethylallyladenine + A + H2O = 3-methyl-2-butenal + adenine + AH2. In terms of biological role, catalyzes the oxidation of cytokinins, a family of N(6)-substituted adenine derivatives that are plant hormones, where the substituent is an isopentenyl group. Modulates asymmetric cytokinin signaling in emerged lateral roots. Its activity determines cell elongation and number in emerged lateral roots and defines angular growth of lateral roots. The polypeptide is Cytokinin dehydrogenase 2 (CKX2) (Arabidopsis thaliana (Mouse-ear cress)).